A 430-amino-acid polypeptide reads, in one-letter code: 3-phosphoshikimate 1-carboxyvinyltransferase (430 aa).

3 residues coordinate 3-phosphoshikimate: Lys20, Ser21, and Arg25. Lys20 contributes to the phosphoenolpyruvate binding site. Residues Gly92 and Arg120 each contribute to the phosphoenolpyruvate site. Residues Ser166, Gln168, Asp312, and Lys339 each coordinate 3-phosphoshikimate. Phosphoenolpyruvate is bound at residue Gln168. Asp312 (proton acceptor) is an active-site residue. 2 residues coordinate phosphoenolpyruvate: Arg343 and Arg387.

This sequence belongs to the EPSP synthase family. Monomer.

It is found in the cytoplasm. It catalyses the reaction 3-phosphoshikimate + phosphoenolpyruvate = 5-O-(1-carboxyvinyl)-3-phosphoshikimate + phosphate. It participates in metabolic intermediate biosynthesis; chorismate biosynthesis; chorismate from D-erythrose 4-phosphate and phosphoenolpyruvate: step 6/7. Functionally, catalyzes the transfer of the enolpyruvyl moiety of phosphoenolpyruvate (PEP) to the 5-hydroxyl of shikimate-3-phosphate (S3P) to produce enolpyruvyl shikimate-3-phosphate and inorganic phosphate. In Lactococcus lactis subsp. lactis (strain IL1403) (Streptococcus lactis), this protein is 3-phosphoshikimate 1-carboxyvinyltransferase.